A 467-amino-acid chain; its full sequence is 3-isopropylmalate dehydratase large subunit (467 aa).

The [4Fe-4S] cluster site is built by cysteine 347, cysteine 407, and cysteine 410.

The protein belongs to the aconitase/IPM isomerase family. LeuC type 1 subfamily. Heterodimer of LeuC and LeuD. Requires [4Fe-4S] cluster as cofactor.

It carries out the reaction (2R,3S)-3-isopropylmalate = (2S)-2-isopropylmalate. The protein operates within amino-acid biosynthesis; L-leucine biosynthesis; L-leucine from 3-methyl-2-oxobutanoate: step 2/4. In terms of biological role, catalyzes the isomerization between 2-isopropylmalate and 3-isopropylmalate, via the formation of 2-isopropylmaleate. This chain is 3-isopropylmalate dehydratase large subunit, found in Synechococcus sp. (strain JA-3-3Ab) (Cyanobacteria bacterium Yellowstone A-Prime).